Consider the following 126-residue polypeptide: Small ribosomal subunit protein uS13 (126 aa).

Residues 92 to 126 are disordered; sequence HRRGLPVRGQRTKTNARTRKGPRKTVAGKKKATRK.

It belongs to the universal ribosomal protein uS13 family. In terms of assembly, part of the 30S ribosomal subunit. Forms a loose heterodimer with protein S19. Forms two bridges to the 50S subunit in the 70S ribosome.

Its function is as follows. Located at the top of the head of the 30S subunit, it contacts several helices of the 16S rRNA. In the 70S ribosome it contacts the 23S rRNA (bridge B1a) and protein L5 of the 50S subunit (bridge B1b), connecting the 2 subunits; these bridges are implicated in subunit movement. Contacts the tRNAs in the A and P-sites. The sequence is that of Small ribosomal subunit protein uS13 from Deinococcus geothermalis (strain DSM 11300 / CIP 105573 / AG-3a).